A 339-amino-acid polypeptide reads, in one-letter code: Transcription initiation factor IIB (339 aa).

The segment at 39–70 (EELICPVCGSKSIIKDYERAEIVCEMCGCVLQ) adopts a TFIIB-type zinc-finger fold. Cys-43, Cys-46, Cys-62, and Cys-65 together coordinate Zn(2+). Tandem repeats lie at residues 156-239 (SELD…SREL) and 250-331 (DYVP…ELTE).

This sequence belongs to the TFIIB family.

Stabilizes TBP binding to an archaeal box-A promoter. Also responsible for recruiting RNA polymerase II to the pre-initiation complex (DNA-TBP-TFIIB). In Methanococcus maripaludis (strain DSM 14266 / JCM 13030 / NBRC 101832 / S2 / LL), this protein is Transcription initiation factor IIB.